The sequence spans 269 residues: Formamidopyrimidine-DNA glycosylase (269 aa).

The active-site Schiff-base intermediate with DNA is P2. E3 serves as the catalytic Proton donor. The Proton donor; for beta-elimination activity role is filled by K57. Residues H90, R109, and K150 each contribute to the DNA site. The FPG-type zinc-finger motif lies at 235–269 (QVYGRKGEPCRVCGTPIVATKHAQRATFYCRQCQK). R259 (proton donor; for delta-elimination activity) is an active-site residue.

Belongs to the FPG family. Monomer. Zn(2+) is required as a cofactor.

It catalyses the reaction Hydrolysis of DNA containing ring-opened 7-methylguanine residues, releasing 2,6-diamino-4-hydroxy-5-(N-methyl)formamidopyrimidine.. The enzyme catalyses 2'-deoxyribonucleotide-(2'-deoxyribose 5'-phosphate)-2'-deoxyribonucleotide-DNA = a 3'-end 2'-deoxyribonucleotide-(2,3-dehydro-2,3-deoxyribose 5'-phosphate)-DNA + a 5'-end 5'-phospho-2'-deoxyribonucleoside-DNA + H(+). In terms of biological role, involved in base excision repair of DNA damaged by oxidation or by mutagenic agents. Acts as a DNA glycosylase that recognizes and removes damaged bases. Has a preference for oxidized purines, such as 7,8-dihydro-8-oxoguanine (8-oxoG). Has AP (apurinic/apyrimidinic) lyase activity and introduces nicks in the DNA strand. Cleaves the DNA backbone by beta-delta elimination to generate a single-strand break at the site of the removed base with both 3'- and 5'-phosphates. The sequence is that of Formamidopyrimidine-DNA glycosylase from Escherichia coli O6:H1 (strain CFT073 / ATCC 700928 / UPEC).